A 494-amino-acid polypeptide reads, in one-letter code: Voltage-gated potassium channel regulatory subunit KCNF1 (494 aa).

The Cytoplasmic segment spans residues 1-183; it reads MDGSGERSLP…KPESSCPARV (183 aa). Residues 184–204 traverse the membrane as a helical segment; the sequence is VAVLSFLLILVSSVVMCMGTI. Residues 224-244 form a helical membrane-spanning segment; the sequence is NVETACIGWFTLEYLLRLFSS. The Cytoplasmic portion of the chain corresponds to 245–249; that stretch reads PNKLH. Residues 250–270 form a helical membrane-spanning segment; it reads FALSFMNIVDVLAILPFYVSL. A helical; Voltage-sensor transmembrane segment spans residues 290–310; that stretch reads QALRIMRIARIFKLARHSSGL. Topologically, residues 311–324 are cytoplasmic; it reads QTLTYALKRSFKEL. A helical transmembrane segment spans residues 325–345; that stretch reads GLLLMYLAVGIFVFSALGYTM. The pore-forming intramembrane region spans 358 to 378; it reads PQSFWWAIITMTTVGYGDIYP. The Selectivity filter signature appears at 370 to 375; sequence TVGYGD. A helical transmembrane segment spans residues 386–406; the sequence is NAAISFLCGVIAIALPIHPII. Residues 407 to 494 are Cytoplasmic-facing; that stretch reads NNFVRYYNKQ…HHRTRLQSCK (88 aa). Residues 433-469 form a disordered region; the sequence is NSSSGGEGKTGGSRSDLDNLPPEPAGKEAPSCSSRLK.

The protein belongs to the potassium channel family. F (TC 1.A.1.2) subfamily. Kv5.1/KCNF1 sub-subfamily. In terms of assembly, heterotetramer with KCNB1 or KCNB2. In terms of tissue distribution, detected in heart, brain, liver, skeletal muscle, kidney and pancreas.

Its subcellular location is the cell membrane. In terms of biological role, regulatory alpha-subunit of the voltage-gated potassium (Kv) channel which, when coassembled with KCNB1 or KCNB2, can modulate their expression and their gating kinetics by acting on deactivation upon repolarization and inactivation during maintained depolarization. Accelerates inactivation but has relatively little effect on deactivation. Coexpression with KCNB1 or KCNB2 markedly slows inactivation. Each modulatory subunit has its own specific properties of regulation, and can lead to extensive inhibitions, to large changes in kinetics, and/or to large shifts in the voltage dependencies of the inactivation process. The gating kinetics depends on the nature and stoichiometry of the associated regulatory sunbunit. Fails to produce a potassium current when expressed alone. The protein is Voltage-gated potassium channel regulatory subunit KCNF1 of Homo sapiens (Human).